Reading from the N-terminus, the 121-residue chain is Small ribosomal subunit protein uS13 (121 aa).

The interval 92 to 121 (RRGLPVRGQNSKNNARTRKGPKRTVANKKK) is disordered. The span at 106–121 (ARTRKGPKRTVANKKK) shows a compositional bias: basic residues.

It belongs to the universal ribosomal protein uS13 family. In terms of assembly, part of the 30S ribosomal subunit. Forms a loose heterodimer with protein S19. Forms two bridges to the 50S subunit in the 70S ribosome.

In terms of biological role, located at the top of the head of the 30S subunit, it contacts several helices of the 16S rRNA. In the 70S ribosome it contacts the 23S rRNA (bridge B1a) and protein L5 of the 50S subunit (bridge B1b), connecting the 2 subunits; these bridges are implicated in subunit movement. Contacts the tRNAs in the A and P-sites. The chain is Small ribosomal subunit protein uS13 from Shouchella clausii (strain KSM-K16) (Alkalihalobacillus clausii).